Here is a 374-residue protein sequence, read N- to C-terminus: tRNA-specific 2-thiouridylase MnmA (374 aa).

ATP-binding positions include 15–22 (GMSGGVDS) and Met41. The interaction with target base in tRNA stretch occupies residues 101 to 103 (NPD). Catalysis depends on Cys106, which acts as the Nucleophile. Cys106 and Cys206 are joined by a disulfide. Gly130 is an ATP binding site. Residues 156 to 158 (KDQ) are interaction with tRNA. Residue Cys206 is the Cysteine persulfide intermediate of the active site. Positions 324 to 325 (RY) are interaction with tRNA.

It belongs to the MnmA/TRMU family.

The protein resides in the cytoplasm. It carries out the reaction S-sulfanyl-L-cysteinyl-[protein] + uridine(34) in tRNA + AH2 + ATP = 2-thiouridine(34) in tRNA + L-cysteinyl-[protein] + A + AMP + diphosphate + H(+). In terms of biological role, catalyzes the 2-thiolation of uridine at the wobble position (U34) of tRNA, leading to the formation of s(2)U34. The polypeptide is tRNA-specific 2-thiouridylase MnmA (Aromatoleum aromaticum (strain DSM 19018 / LMG 30748 / EbN1) (Azoarcus sp. (strain EbN1))).